The chain runs to 536 residues: MLLCDGLGPEPPRQRHRNRTSAARIRKRPKCCCGDGGSGNQAEQPGGIVSNPISYGQSLTTLARVTAAALTTAAMLHTTNALAATGSSSASNSSTGGIALPLGTATPATHELNATQPFGGSGLNFNESGAGLSDHHHHQQHNPDEDWLDNIVWVFKAFVMLLIIIAAICGNLLVIISVMRVRKLRVITNYFVVSLAMADIMVAIMAMTFNFSVQVTGRWNFSPFLCDLWNSLDVYFSTASILHLCCISVDRYYAIVKPLKYPISMTKRVVGIMLLNTWISPALLSFLPIFIGWYTTPQHQQFVIQNPTQCSFVVNKYYAVISSSISFWIPCTIMIFTYLAIFREANRQEKQLMMRHGNAMLMHRPSMQPSGEALSGSGSSKTLTLHEVEQEHTPTKDKHLIKMKREHKAARTLGIIMGTFILCWLPFFLWYTLSMTCEECQVPDIVVSILFWIGYFNSTLNPLIYAYFNRDFREAFRNTLLCLFCNWWKDRHLPLDIDIRRSSLRYDQRAKSVYSESYLNSTTPSHRRQSQMVDNL.

The segment at Met1–Arg26 is disordered. At Met1–Ala157 the chain is on the extracellular side. Residues Gln14 to Arg26 are compositionally biased toward basic residues. N-linked (GlcNAc...) asparagine glycans are attached at residues Asn18, Asn92, Asn113, and Asn126. The helical transmembrane segment at Phe158–Val178 threads the bilayer. Residues Met179–Tyr190 are Cytoplasmic-facing. The chain crosses the membrane as a helical span at residues Phe191 to Phe211. Over Ser212–Asp233 the chain is Extracellular. The chain crosses the membrane as a helical span at residues Val234 to Val256. Residues Lys257–Val270 are Cytoplasmic-facing. The helical transmembrane segment at Gly271–Ile291 threads the bilayer. Over Gly292–Val320 the chain is Extracellular. A helical transmembrane segment spans residues Ile321–Ile341. Residues Phe342–Thr412 lie on the Cytoplasmic side of the membrane. Residues Leu413–Leu433 form a helical membrane-spanning segment. At Ser434–Asp444 the chain is on the extracellular side. The chain crosses the membrane as a helical span at residues Ile445–Tyr465. The Cytoplasmic portion of the chain corresponds to Ala466–Leu536.

Belongs to the G-protein coupled receptor 1 family. In terms of tissue distribution, in the adult, expressed in the superior protocerebrum and the optic lobe medulla of the central nervous system, nurse cells of egg chambers in the ovary at oogenic stages 1-10, and spermatogonia and spermatocytes in the testis. Expressed in the oviduct epithelium. Also expressed in the spermatheca. Expressed in embryonic and larval ventral nerve cord and brain lobe, embryonic and larval salivary glands and larval imaginal disk and midgut. Also expressed in larval synaptic boutons.

It is found in the cell membrane. Functionally, autoreceptor for octopamine (OA), which is a neurotransmitter, neurohormone, and neuromodulator in invertebrates. Essential for ovulation and fertilization. During ovulation it mediates the OA-induced relaxation of the oviduct visceral muscles, by increasing cAMP levels and activating effectors such as calmodulin-dependent kinase II (CaMKII) and cAMP-dependent protein kinase A (PKA) pathways. Positively regulates synaptic growth; an action that is antagonized by Octbeta1R. This is Octopamine receptor beta-2R from Drosophila melanogaster (Fruit fly).